The chain runs to 85 residues: Cell division topological specificity factor (85 aa).

The protein belongs to the MinE family.

Functionally, prevents the cell division inhibition by proteins MinC and MinD at internal division sites while permitting inhibition at polar sites. This ensures cell division at the proper site by restricting the formation of a division septum at the midpoint of the long axis of the cell. In Xylella fastidiosa (strain M12), this protein is Cell division topological specificity factor.